Reading from the N-terminus, the 113-residue chain is uncharacterized protein (113 aa).

Residues 1–19 form the signal peptide; it reads MLSPLSPRIIAAFTTAVGA.

The protein to M.tuberculosis Rv1291c.

This is an uncharacterized protein from Mycobacterium tuberculosis (strain CDC 1551 / Oshkosh).